A 370-amino-acid chain; its full sequence is Holliday junction branch migration complex subunit RuvB (370 aa).

Residues 1-182 are large ATPase domain (RuvB-L); sequence MDERMMTSAK…FGVIHRLEYY (182 aa). Residues Leu-21, Arg-22, Gly-63, Lys-66, Thr-67, Thr-68, 129 to 131, Arg-172, Tyr-182, and Arg-219 each bind ATP; that span reads EDF. Thr-67 contacts Mg(2+). A small ATPAse domain (RuvB-S) region spans residues 183–253; it reads RPDELEFIIL…VAREALRRLE (71 aa). The segment at 256-370 is head domain (RuvB-H); that stretch reads PRGLDTTDQR…AEQAALSFDE (115 aa). Residues Arg-311 and Arg-316 each coordinate DNA.

The protein belongs to the RuvB family. As to quaternary structure, homohexamer. Forms an RuvA(8)-RuvB(12)-Holliday junction (HJ) complex. HJ DNA is sandwiched between 2 RuvA tetramers; dsDNA enters through RuvA and exits via RuvB. An RuvB hexamer assembles on each DNA strand where it exits the tetramer. Each RuvB hexamer is contacted by two RuvA subunits (via domain III) on 2 adjacent RuvB subunits; this complex drives branch migration. In the full resolvosome a probable DNA-RuvA(4)-RuvB(12)-RuvC(2) complex forms which resolves the HJ.

It localises to the cytoplasm. The enzyme catalyses ATP + H2O = ADP + phosphate + H(+). In terms of biological role, the RuvA-RuvB-RuvC complex processes Holliday junction (HJ) DNA during genetic recombination and DNA repair, while the RuvA-RuvB complex plays an important role in the rescue of blocked DNA replication forks via replication fork reversal (RFR). RuvA specifically binds to HJ cruciform DNA, conferring on it an open structure. The RuvB hexamer acts as an ATP-dependent pump, pulling dsDNA into and through the RuvAB complex. RuvB forms 2 homohexamers on either side of HJ DNA bound by 1 or 2 RuvA tetramers; 4 subunits per hexamer contact DNA at a time. Coordinated motions by a converter formed by DNA-disengaged RuvB subunits stimulates ATP hydrolysis and nucleotide exchange. Immobilization of the converter enables RuvB to convert the ATP-contained energy into a lever motion, pulling 2 nucleotides of DNA out of the RuvA tetramer per ATP hydrolyzed, thus driving DNA branch migration. The RuvB motors rotate together with the DNA substrate, which together with the progressing nucleotide cycle form the mechanistic basis for DNA recombination by continuous HJ branch migration. Branch migration allows RuvC to scan DNA until it finds its consensus sequence, where it cleaves and resolves cruciform DNA. This Heliobacterium modesticaldum (strain ATCC 51547 / Ice1) protein is Holliday junction branch migration complex subunit RuvB.